A 156-amino-acid chain; its full sequence is Small ribosomal subunit protein uS7 (156 aa).

Belongs to the universal ribosomal protein uS7 family. As to quaternary structure, part of the 30S ribosomal subunit. Contacts proteins S9 and S11.

Its function is as follows. One of the primary rRNA binding proteins, it binds directly to 16S rRNA where it nucleates assembly of the head domain of the 30S subunit. Is located at the subunit interface close to the decoding center, probably blocks exit of the E-site tRNA. This Methylorubrum extorquens (strain CM4 / NCIMB 13688) (Methylobacterium extorquens) protein is Small ribosomal subunit protein uS7.